Consider the following 388-residue polypeptide: Transcription factor TB1 (388 aa).

The TCP domain maps to 115–173 (RKDRHSKISTAGGMRDRRMRLSLDVARKFFALQDMLGFDKASKTVQWLLNMSKAAIREI). 2 disordered regions span residues 180–269 (SVCE…EKNR) and 289–331 (AAGE…VGVS). A compositionally biased stretch (polar residues) spans 187–201 (SSSLSVDGKQQQHSN). Basic and acidic residues-rich tracts occupy residues 210–224 (GDHK…DGKK) and 247–269 (VPDK…EKNR). Residues 250 to 267 (KESRAKARERARERTKEK) form the R domain. Low complexity predominate over residues 289–314 (AAGEDKSPTSPSNNLNHSSSTNLVST).

In terms of assembly, interacts with MADS57. Expressed in the axillary bud of the first formed leaf node. Expressed in axillary buds, shoot apical meristem, young leaves, vascular tissues and the tips of crown roots.

It localises to the nucleus. Its function is as follows. Probable transcription factor that functions as a negative regulator of lateral branching, presumably through its expression in axillary buds. Involved in the fine tuning of shoot branching. May function as an integrator of multiple signaling pathways to regulate the development of axillary buds. Works partially downstream of strigolactones to inhibit bud outgrowth. Binds to MADS57 to suppress the negative regulation of D14 by MADS57 and balance the expression of D14 for tillering. This Oryza sativa subsp. japonica (Rice) protein is Transcription factor TB1.